The chain runs to 316 residues: Phosphate acyltransferase (316 aa).

The protein belongs to the PlsX family. Homodimer. Probably interacts with PlsY.

It is found in the cytoplasm. The enzyme catalyses a fatty acyl-[ACP] + phosphate = an acyl phosphate + holo-[ACP]. The protein operates within lipid metabolism; phospholipid metabolism. Catalyzes the reversible formation of acyl-phosphate (acyl-PO(4)) from acyl-[acyl-carrier-protein] (acyl-ACP). This enzyme utilizes acyl-ACP as fatty acyl donor, but not acyl-CoA. The chain is Phosphate acyltransferase from Chlamydia caviae (strain ATCC VR-813 / DSM 19441 / 03DC25 / GPIC) (Chlamydophila caviae).